We begin with the raw amino-acid sequence, 175 residues long: Sec-independent protein translocase protein TatB (175 aa).

A helical membrane pass occupies residues 1 to 21 (MLDLGLSKMALIGVVALVVLG). A compositionally biased stretch (low complexity) spans 96-115 (VSPGGSAAADAPDGPSAASG). 2 disordered regions span residues 96–119 (VSPG…EPSW) and 152–175 (QVQS…ARFL). The segment covering 160–175 (VARHRPASLRRPARFL) has biased composition (basic residues).

It belongs to the TatB family. In terms of assembly, the Tat system comprises two distinct complexes: a TatABC complex, containing multiple copies of TatA, TatB and TatC subunits, and a separate TatA complex, containing only TatA subunits. Substrates initially bind to the TatABC complex, which probably triggers association of the separate TatA complex to form the active translocon.

It localises to the cell inner membrane. Functionally, part of the twin-arginine translocation (Tat) system that transports large folded proteins containing a characteristic twin-arginine motif in their signal peptide across membranes. Together with TatC, TatB is part of a receptor directly interacting with Tat signal peptides. TatB may form an oligomeric binding site that transiently accommodates folded Tat precursor proteins before their translocation. The polypeptide is Sec-independent protein translocase protein TatB (Burkholderia pseudomallei (strain 1710b)).